A 119-amino-acid chain; its full sequence is Large ribosomal subunit protein uL22 (119 aa).

This sequence belongs to the universal ribosomal protein uL22 family. As to quaternary structure, part of the 50S ribosomal subunit.

Its function is as follows. This protein binds specifically to 23S rRNA; its binding is stimulated by other ribosomal proteins, e.g. L4, L17, and L20. It is important during the early stages of 50S assembly. It makes multiple contacts with different domains of the 23S rRNA in the assembled 50S subunit and ribosome. Functionally, the globular domain of the protein is located near the polypeptide exit tunnel on the outside of the subunit, while an extended beta-hairpin is found that lines the wall of the exit tunnel in the center of the 70S ribosome. This Rickettsia prowazekii (strain Madrid E) protein is Large ribosomal subunit protein uL22.